Reading from the N-terminus, the 155-residue chain is Transcriptional repressor NrdR (155 aa).

A zinc finger spans residues Cys-3–Cys-34. In terms of domain architecture, ATP-cone spans Pro-49 to Asp-139.

This sequence belongs to the NrdR family. It depends on Zn(2+) as a cofactor.

In terms of biological role, negatively regulates transcription of bacterial ribonucleotide reductase nrd genes and operons by binding to NrdR-boxes. This is Transcriptional repressor NrdR from Legionella pneumophila (strain Paris).